The chain runs to 373 residues: uncharacterized protein (373 aa).

One can recognise a CP-type G domain in the interval 14–168 (KKIVNKIIDE…LMDTPGVLEM (155 aa)). 117 to 124 (GYPNVGKS) is a GTP binding site.

It belongs to the TRAFAC class YlqF/YawG GTPase family.

This is an uncharacterized protein from Methanocaldococcus jannaschii (strain ATCC 43067 / DSM 2661 / JAL-1 / JCM 10045 / NBRC 100440) (Methanococcus jannaschii).